We begin with the raw amino-acid sequence, 361 residues long: Probable mannose-1-phosphate guanylyltransferase 3 (361 aa).

GDP-alpha-D-mannose is bound by residues leucine 6 and valine 7. Positions 9, 11, 12, 13, and 23 each coordinate diphosphate. Glycine 85, asparagine 109, aspartate 111, glycine 146, and asparagine 173 together coordinate GDP-alpha-D-mannose.

The protein belongs to the transferase hexapeptide repeat family.

It carries out the reaction alpha-D-mannose 1-phosphate + GTP + H(+) = GDP-alpha-D-mannose + diphosphate. The protein operates within nucleotide-sugar biosynthesis; GDP-alpha-D-mannose biosynthesis; GDP-alpha-D-mannose from alpha-D-mannose 1-phosphate (GTP route): step 1/1. In terms of biological role, catalyzes a reaction of the Smirnoff-Wheeler pathway, the major route to ascorbate biosynthesis in plants. This chain is Probable mannose-1-phosphate guanylyltransferase 3, found in Oryza sativa subsp. japonica (Rice).